The primary structure comprises 257 residues: ATP synthase subunit a (257 aa).

Positions 1–4 are cleaved as a propeptide — removed in mature form; the sequence is MFIT. Helical transmembrane passes span 27–47, 58–78, 93–113, 122–142, 149–169, 189–209, 214–234, and 236–256; these read FSNF…LAII, IVPQ…LNLV, YFPF…LRLI, QLIF…ILGL, VFGL…LVLI, IIAG…FMGL, FIIG…EFGI, and FIQA…SLNL.

This sequence belongs to the ATPase A chain family. F-type ATPases have 2 components, CF(1) - the catalytic core - and CF(0) - the membrane proton channel. CF(1) has five subunits: alpha(3), beta(3), gamma(1), delta(1), epsilon(1). CF(0) has three main subunits: a, b and c.

It localises to the mitochondrion inner membrane. In terms of biological role, mitochondrial membrane ATP synthase (F(1)F(0) ATP synthase or Complex V) produces ATP from ADP in the presence of a proton gradient across the membrane which is generated by electron transport complexes of the respiratory chain. F-type ATPases consist of two structural domains, F(1) - containing the extramembraneous catalytic core and F(0) - containing the membrane proton channel, linked together by a central stalk and a peripheral stalk. During catalysis, ATP synthesis in the catalytic domain of F(1) is coupled via a rotary mechanism of the central stalk subunits to proton translocation. Key component of the proton channel; it may play a direct role in the translocation of protons across the membrane. The chain is ATP synthase subunit a (atp6) from Schizosaccharomyces pombe (strain 972 / ATCC 24843) (Fission yeast).